A 344-amino-acid polypeptide reads, in one-letter code: tRNA N6-adenosine threonylcarbamoyltransferase (344 aa).

2 residues coordinate Fe cation: H110 and H114. Substrate-binding positions include 133–137 (VVSGA), D166, G179, and N278. Position 303 (D303) interacts with Fe cation.

It belongs to the KAE1 / TsaD family. The cofactor is Fe(2+).

The protein resides in the cytoplasm. It catalyses the reaction L-threonylcarbamoyladenylate + adenosine(37) in tRNA = N(6)-L-threonylcarbamoyladenosine(37) in tRNA + AMP + H(+). Required for the formation of a threonylcarbamoyl group on adenosine at position 37 (t(6)A37) in tRNAs that read codons beginning with adenine. Is involved in the transfer of the threonylcarbamoyl moiety of threonylcarbamoyl-AMP (TC-AMP) to the N6 group of A37, together with TsaE and TsaB. TsaD likely plays a direct catalytic role in this reaction. This is tRNA N6-adenosine threonylcarbamoyltransferase from Chlamydia pneumoniae (Chlamydophila pneumoniae).